A 466-amino-acid chain; its full sequence is MAGSKIRSQYRCSECQHVAPKWVGRCANCGTWGTVDEVAVLAGNNKLNGAARRSVAPTSPAVPITSIDPGVTRHYPTGVSELDRVLGGGLVAGSVTLLAGDPGVGKSTLLLEVANRWAHSGKRALYLSGEESAGQIRLRAERTGCTHDQVYLAAESDLQIALGHIDEVKPSLVVVDSVQTMSTTEADGVTGGVTQVRAVTTSLTAYAKAAVGDPAVAMILVGHVTKDGAIAGPRSLEHLVDVVLHFEGDRASSLRMVRGVKNRFGAADEVGCFQLHDNGIECVSDPSGLFLDQRPLAVPGTAVTVTLDGKRPMIGEVQALVSPPAGPPRRAVSGIDSARAAMIGAVLQTRCRMPINSNDLYLSTVGGMRLTDPSADLAVALAIASAYFDIAMPMKAIAIGEVGLAGDLRRVTGMDRRLSEAARLGFTTAVVPPGVTSAPAGLKVVAADNIRAAVQTMREIAIAGAQ.

A C4-type zinc finger spans residues 12–29; that stretch reads CSECQHVAPKWVGRCANC. 100 to 107 is an ATP binding site; it reads GDPGVGKS. A RadA KNRFG motif motif is present at residues 261–265; the sequence is KNRFG. Residues 359–466 are lon-protease-like; it reads DLYLSTVGGM…MREIAIAGAQ (108 aa).

It belongs to the RecA family. RadA subfamily. In terms of assembly, interacts with DisA.

Its function is as follows. DNA-dependent ATPase involved in processing of recombination intermediates, plays a role in repairing DNA breaks. Stimulates the branch migration of RecA-mediated strand transfer reactions, allowing the 3' invading strand to extend heteroduplex DNA faster. Binds ssDNA in the presence of ADP but not other nucleotides, has ATPase activity that is stimulated by ssDNA and various branched DNA structures, but inhibited by SSB. Does not have RecA's homology-searching function. Also inhibits the diadenylate cyclase activity of DisA. The sequence is that of DNA repair protein RadA from Mycolicibacterium smegmatis (strain ATCC 700084 / mc(2)155) (Mycobacterium smegmatis).